An 81-amino-acid polypeptide reads, in one-letter code: Beta-catenin-interacting protein 1 (81 aa).

Residue serine 59 is modified to Phosphoserine.

It belongs to the CTNNBIP1 family. In terms of assembly, binds CTNNB1.

It localises to the cytoplasm. The protein localises to the nucleus. In terms of biological role, prevents the interaction between CTNNB1 and TCF family members, and acts as a negative regulator of the Wnt signaling pathway. The protein is Beta-catenin-interacting protein 1 (CTNNBIP1) of Bos taurus (Bovine).